The primary structure comprises 668 residues: Trehalase (668 aa).

The tract at residues 1–23 is disordered; it reads MVLQQTEPTDGADRKASDGPLTV.

It belongs to the glycosyl hydrolase 15 family. Homomultimer of 20 or more subunits. Mg(2+) serves as cofactor. Requires phosphate as cofactor.

The catalysed reaction is alpha,alpha-trehalose + H2O = alpha-D-glucose + beta-D-glucose. It functions in the pathway glycan degradation; trehalose degradation; D-glucose from alpha,alpha-trehalose: step 1/1. With respect to regulation, inhibited by pyrophosphate and polyphosphates. Also competitively inhibited by validoxylamine and castanospermine, but not by trehazolin. Functionally, catalyzes the hydrolysis of alpha,alpha-trehalose into two molecules of D-glucose. Does not hydrolyze maltose, isomaltose, sucrose, cellobiose, p-nitrophenyl-alpha-D-glucopyranoside, and methyl-alpha-D-glucopyranoside. Is also inactive on alpha,beta-trehalose, beta,beta-trehalose, alpha,alpha-trehalose-6,6'-dibehenate, trehalulose, nigerose, and trehalose dimycolate. This Mycolicibacterium smegmatis (strain ATCC 700084 / mc(2)155) (Mycobacterium smegmatis) protein is Trehalase.